The primary structure comprises 1342 residues: DNA-directed RNA polymerase subunit beta (1342 aa).

This sequence belongs to the RNA polymerase beta chain family. As to quaternary structure, the RNAP catalytic core consists of 2 alpha, 1 beta, 1 beta' and 1 omega subunit. When a sigma factor is associated with the core the holoenzyme is formed, which can initiate transcription.

It catalyses the reaction RNA(n) + a ribonucleoside 5'-triphosphate = RNA(n+1) + diphosphate. DNA-dependent RNA polymerase catalyzes the transcription of DNA into RNA using the four ribonucleoside triphosphates as substrates. In Blochmanniella floridana, this protein is DNA-directed RNA polymerase subunit beta.